Consider the following 198-residue polypeptide: Large ribosomal subunit protein bL25 (198 aa).

It belongs to the bacterial ribosomal protein bL25 family. CTC subfamily. As to quaternary structure, part of the 50S ribosomal subunit; part of the 5S rRNA/L5/L18/L25 subcomplex. Contacts the 5S rRNA. Binds to the 5S rRNA independently of L5 and L18.

This is one of the proteins that binds to the 5S RNA in the ribosome where it forms part of the central protuberance. The sequence is that of Large ribosomal subunit protein bL25 from Nitrosomonas europaea (strain ATCC 19718 / CIP 103999 / KCTC 2705 / NBRC 14298).